The following is a 111-amino-acid chain: Rubredoxin (111 aa).

A Rubredoxin-like domain is found at 11–62 (LDRFECRSCGYVYEPEKGDSKHDIAPETPFAELPINWRCPVCTAKKAAFSNI). 4 residues coordinate Fe cation: Cys16, Cys19, Cys49, and Cys52.

The protein belongs to the rubredoxin family. It depends on Fe(3+) as a cofactor.

Functionally, rubredoxin is a small nonheme, iron protein lacking acid-labile sulfide. Its single Fe, chelated to 4 Cys, functions as an electron acceptor and may also stabilize the conformation of the molecule. Could be involved in hydrogenase-linked redox processes. The sequence is that of Rubredoxin (rub) from Trichormus variabilis (strain ATCC 29413 / PCC 7937) (Anabaena variabilis).